A 66-amino-acid polypeptide reads, in one-letter code: Small ribosomal subunit protein bS21 (66 aa).

The protein belongs to the bacterial ribosomal protein bS21 family.

This Rickettsia akari (strain Hartford) protein is Small ribosomal subunit protein bS21.